Reading from the N-terminus, the 75-residue chain is Conotoxin Vn5.6 (75 aa).

Positions 1–19 (MLCLPVFIILLLLASPAAP) are cleaved as a signal peptide. Residues 20–59 (NPLEKRIQSDLIRAALEDADMKTGEREILNIIDSISDVAK) constitute a propeptide that is removed on maturation. Position 60 is a pyrrolidone carboxylic acid (Gln60).

This sequence belongs to the conotoxin T superfamily. Contains 2 disulfide bonds that can be either 'C1-C3, C2-C4' or 'C1-C4, C2-C3', since these disulfide connectivities have been observed for conotoxins with cysteine framework V (for examples, see AC P0DQQ7 and AC P81755). Expressed by the venom duct.

The protein localises to the secreted. The protein is Conotoxin Vn5.6 of Conus ventricosus (Mediterranean cone).